The chain runs to 209 residues: Large ribosomal subunit protein uL3 (209 aa).

It belongs to the universal ribosomal protein uL3 family. Part of the 50S ribosomal subunit. Forms a cluster with proteins L14 and L19.

Functionally, one of the primary rRNA binding proteins, it binds directly near the 3'-end of the 23S rRNA, where it nucleates assembly of the 50S subunit. This is Large ribosomal subunit protein uL3 from Desulfotalea psychrophila (strain LSv54 / DSM 12343).